The chain runs to 365 residues: Peptide chain release factor 2 (365 aa).

Position 252 is an N5-methylglutamine (Gln-252).

The protein belongs to the prokaryotic/mitochondrial release factor family. In terms of processing, methylated by PrmC. Methylation increases the termination efficiency of RF2.

It is found in the cytoplasm. In terms of biological role, peptide chain release factor 2 directs the termination of translation in response to the peptide chain termination codons UGA and UAA. The polypeptide is Peptide chain release factor 2 (Aeromonas hydrophila subsp. hydrophila (strain ATCC 7966 / DSM 30187 / BCRC 13018 / CCUG 14551 / JCM 1027 / KCTC 2358 / NCIMB 9240 / NCTC 8049)).